An 823-amino-acid polypeptide reads, in one-letter code: Valine--tRNA ligase (823 aa).

The 'HIGH' region signature appears at 52 to 62; that stretch reads PTVSGVLHMGH. Positions 549-553 match the 'KMSKS' region motif; sequence KMSKS. Lys552 is a binding site for ATP.

The protein belongs to the class-I aminoacyl-tRNA synthetase family. ValS type 2 subfamily. In terms of assembly, monomer.

It is found in the cytoplasm. The catalysed reaction is tRNA(Val) + L-valine + ATP = L-valyl-tRNA(Val) + AMP + diphosphate. Functionally, catalyzes the attachment of valine to tRNA(Val). As ValRS can inadvertently accommodate and process structurally similar amino acids such as threonine, to avoid such errors, it has a 'posttransfer' editing activity that hydrolyzes mischarged Thr-tRNA(Val) in a tRNA-dependent manner. In Anaplasma marginale (strain St. Maries), this protein is Valine--tRNA ligase.